Reading from the N-terminus, the 492-residue chain is Aspartyl/glutamyl-tRNA(Asn/Gln) amidotransferase subunit B (492 aa).

It belongs to the GatB/GatE family. GatB subfamily. As to quaternary structure, heterotrimer of A, B and C subunits.

It catalyses the reaction L-glutamyl-tRNA(Gln) + L-glutamine + ATP + H2O = L-glutaminyl-tRNA(Gln) + L-glutamate + ADP + phosphate + H(+). The enzyme catalyses L-aspartyl-tRNA(Asn) + L-glutamine + ATP + H2O = L-asparaginyl-tRNA(Asn) + L-glutamate + ADP + phosphate + 2 H(+). Functionally, allows the formation of correctly charged Asn-tRNA(Asn) or Gln-tRNA(Gln) through the transamidation of misacylated Asp-tRNA(Asn) or Glu-tRNA(Gln) in organisms which lack either or both of asparaginyl-tRNA or glutaminyl-tRNA synthetases. The reaction takes place in the presence of glutamine and ATP through an activated phospho-Asp-tRNA(Asn) or phospho-Glu-tRNA(Gln). This Azorhizobium caulinodans (strain ATCC 43989 / DSM 5975 / JCM 20966 / LMG 6465 / NBRC 14845 / NCIMB 13405 / ORS 571) protein is Aspartyl/glutamyl-tRNA(Asn/Gln) amidotransferase subunit B.